Here is a 978-residue protein sequence, read N- to C-terminus: Chaperone protein ClpB2, chloroplastic (978 aa).

The transit peptide at 1 to 76 (MAAAPPLAAG…RMPPRTLSVR (76 aa)) directs the protein to the chloroplast. One can recognise a Clp R domain in the interval 85–229 (TQQEFTEMAW…KTAIESIRGK (145 aa)). Repeat stretches follow at residues 89 to 154 (FTEM…IQRQ) and 166 to 229 (LGRD…IRGK). The i stretch occupies residues 244–492 (LDKYGKDLTA…KLKMEITSKP (249 aa)). Residues 289–296 (GEPGVGKT) and 692–699 (GPTGVGKT) each bind ATP. Positions 618-809 (VTQDDIAEIV…IIIMTSNVGS (192 aa)) are II.

This sequence belongs to the ClpA/ClpB family.

The protein localises to the plastid. It is found in the chloroplast. Molecular chaperone that may play a role in chloroplast development. In Oryza sativa subsp. japonica (Rice), this protein is Chaperone protein ClpB2, chloroplastic (CLPB2).